The chain runs to 69 residues: Fungal defensin oryzeasin (69 aa).

Positions 1-18 (MKLLTVAFSLLLLGQVHA) are cleaved as a signal peptide. Positions 19-26 (SPLVLDKR) are excised as a propeptide. Disulfide bonds link C29–C60, C44–C66, and C48–C68.

Belongs to the invertebrate defensin family.

It localises to the secreted. It is found in the target cell membrane. Functionally, shows antibacterial activity against numerous Gram-positive bacteria. It selectively inhibits peptidoglycan biosynthesis through complex formation with the cell wall precursor lipid II (1:1 molar ratio) thus inhibiting cell wall synthesis. In Aspergillus oryzae (strain ATCC 42149 / RIB 40) (Yellow koji mold), this protein is Fungal defensin oryzeasin.